Consider the following 416-residue polypeptide: Multifunctional CCA protein (416 aa).

Positions 8 and 11 each coordinate ATP. CTP is bound by residues Gly8 and Arg11. Mg(2+) contacts are provided by Asp21 and Asp23. The ATP site is built by Arg91, Arg137, and Arg140. Positions 91, 137, and 140 each coordinate CTP. One can recognise an HD domain in the interval 228–329 (TGVHTLMVLA…VKIFDKADFW (102 aa)).

It belongs to the tRNA nucleotidyltransferase/poly(A) polymerase family. Bacterial CCA-adding enzyme type 1 subfamily. As to quaternary structure, monomer. Can also form homodimers and oligomers. Requires Mg(2+) as cofactor. Ni(2+) is required as a cofactor.

The enzyme catalyses a tRNA precursor + 2 CTP + ATP = a tRNA with a 3' CCA end + 3 diphosphate. It catalyses the reaction a tRNA with a 3' CCA end + 2 CTP + ATP = a tRNA with a 3' CCACCA end + 3 diphosphate. Functionally, catalyzes the addition and repair of the essential 3'-terminal CCA sequence in tRNAs without using a nucleic acid template. Adds these three nucleotides in the order of C, C, and A to the tRNA nucleotide-73, using CTP and ATP as substrates and producing inorganic pyrophosphate. tRNA 3'-terminal CCA addition is required both for tRNA processing and repair. Also involved in tRNA surveillance by mediating tandem CCA addition to generate a CCACCA at the 3' terminus of unstable tRNAs. While stable tRNAs receive only 3'-terminal CCA, unstable tRNAs are marked with CCACCA and rapidly degraded. The polypeptide is Multifunctional CCA protein (Shewanella baltica (strain OS185)).